A 96-amino-acid chain; its full sequence is MEQAPADQGPQREPYNEWALELLEELKSEAVRHFPRIWLHSLGQHIYETYGDTWVGVEAIIRILQQLLFIHFRIGCQHSRIGIIRQRRARNGSSRS.

The interval 1-42 (MEQAPADQGPQREPYNEWALELLEELKSEAVRHFPRIWLHSL) is homooligomerization. Phosphoserine; by host occurs at positions 79, 94, and 96.

Belongs to the HIV-1 VPR protein family. Homooligomer, may form homodimer. Interacts with p6-gag region of the Pr55 Gag precursor protein through a (Leu-X-X)4 motif near the C-terminus of the P6gag protein. Interacts with host UNG. May interact with host RAD23A/HHR23A. Interacts with host VPRBP/DCAF1, leading to hijack the CUL4A-RBX1-DDB1-DCAF1/VPRBP complex, mediating ubiquitination of host proteins such as TERT and ZGPAT and arrest of the cell cycle in G2 phase. In terms of processing, phosphorylated on several residues by host. These phosphorylations regulate VPR activity for the nuclear import of the HIV-1 pre-integration complex.

It is found in the virion. The protein resides in the host nucleus. It localises to the host extracellular space. During virus replication, may deplete host UNG protein, and incude G2-M cell cycle arrest. Acts by targeting specific host proteins for degradation by the 26S proteasome, through association with the cellular CUL4A-DDB1 E3 ligase complex by direct interaction with host VPRPB/DCAF-1. Cell cycle arrest reportedly occurs within hours of infection and is not blocked by antiviral agents, suggesting that it is initiated by the VPR carried into the virion. Additionally, VPR induces apoptosis in a cell cycle dependent manner suggesting that these two effects are mechanistically linked. Detected in the serum and cerebrospinal fluid of AIDS patient, VPR may also induce cell death to bystander cells. Its function is as follows. During virus entry, plays a role in the transport of the viral pre-integration (PIC) complex to the host nucleus. This function is crucial for viral infection of non-dividing macrophages. May act directly at the nuclear pore complex, by binding nucleoporins phenylalanine-glycine (FG)-repeat regions. The protein is Protein Vpr of Human immunodeficiency virus type 1 group M subtype D (isolate ELI) (HIV-1).